The primary structure comprises 468 residues: Cyclin-T1.1 (468 aa).

Residues 336–354 (KERGVEEERRKRERDRMAG) are compositionally biased toward basic and acidic residues. The disordered stretch occupies residues 336 to 468 (KERGVEEERR…DMDLEDGELE (133 aa)). Pro residues predominate over residues 387-402 (APPPIPPQLNFPPPPI). Acidic residues predominate over residues 458–468 (SDMDLEDGELE).

This sequence belongs to the cyclin family. Cyclin C subfamily.

Functionally, regulatory subunit of the cyclin-dependent kinase pair (CDK9/cyclin T) complex, also called positive transcription elongation factor B (P-TEFb), which is proposed to facilitate the transition from abortive to production elongation by phosphorylating the CTD (carboxy-terminal domain) of the large subunit of RNA polymerase II (RNAP II). The polypeptide is Cyclin-T1.1 (Caenorhabditis elegans).